We begin with the raw amino-acid sequence, 500 residues long: Glutamyl-tRNA(Gln) amidotransferase subunit A (500 aa).

Active-site charge relay system residues include Lys-81 and Ser-161. Catalysis depends on Ser-185, which acts as the Acyl-ester intermediate.

It belongs to the amidase family. GatA subfamily. Heterotrimer of A, B and C subunits.

It carries out the reaction L-glutamyl-tRNA(Gln) + L-glutamine + ATP + H2O = L-glutaminyl-tRNA(Gln) + L-glutamate + ADP + phosphate + H(+). Allows the formation of correctly charged Gln-tRNA(Gln) through the transamidation of misacylated Glu-tRNA(Gln) in organisms which lack glutaminyl-tRNA synthetase. The reaction takes place in the presence of glutamine and ATP through an activated gamma-phospho-Glu-tRNA(Gln). This Rhodospirillum rubrum (strain ATCC 11170 / ATH 1.1.1 / DSM 467 / LMG 4362 / NCIMB 8255 / S1) protein is Glutamyl-tRNA(Gln) amidotransferase subunit A.